The following is a 208-amino-acid chain: Small ribosomal subunit protein uS4 (208 aa).

Positions 98-159 (RRLDNVVYRL…KSRKIVSIND (62 aa)) constitute an S4 RNA-binding domain.

It belongs to the universal ribosomal protein uS4 family. As to quaternary structure, part of the 30S ribosomal subunit. Contacts protein S5. The interaction surface between S4 and S5 is involved in control of translational fidelity.

Its function is as follows. One of the primary rRNA binding proteins, it binds directly to 16S rRNA where it nucleates assembly of the body of the 30S subunit. With S5 and S12 plays an important role in translational accuracy. The sequence is that of Small ribosomal subunit protein uS4 from Pelobacter propionicus (strain DSM 2379 / NBRC 103807 / OttBd1).